Reading from the N-terminus, the 171-residue chain is Laminin subunit beta-1 (171 aa).

The first 29 residues, methionine 1 to glycine 29, serve as a signal peptide directing secretion. Cystine bridges form between cysteine 59/cysteine 69, cysteine 72/cysteine 81, cysteine 84/cysteine 100, cysteine 103/cysteine 118, and cysteine 105/cysteine 128. 3 Laminin EGF-like domains span residues threonine 66–arginine 102, cysteine 103–lysine 160, and cysteine 161–serine 171. A glycan (N-linked (GlcNAc...) asparagine) is linked at asparagine 130. Disulfide bonds link cysteine 131–cysteine 140 and cysteine 143–cysteine 158.

In terms of assembly, laminin is a complex glycoprotein, consisting of three different polypeptide chains (alpha, beta, gamma), which are bound to each other by disulfide bonds into a cross-shaped molecule comprising one long and three short arms with globules at each end.

Its subcellular location is the secreted. The protein resides in the extracellular space. The protein localises to the extracellular matrix. It localises to the basement membrane. Functionally, binding to cells via a high affinity receptor, laminin is thought to mediate the attachment, migration and organization of cells into tissues during embryonic development by interacting with other extracellular matrix components. This is Laminin subunit beta-1 from Hydra vulgaris (Hydra).